The primary structure comprises 148 residues: Transthyretin-like protein 2 (148 aa).

A signal peptide spans 1 to 17; the sequence is MSKYAILGLVLVGTVAS. N-linked (GlcNAc...) asparagine glycosylation occurs at asparagine 77.

It belongs to the nematode transthyretin-like family.

Its subcellular location is the secreted. This chain is Transthyretin-like protein 2 (ttr-2), found in Caenorhabditis elegans.